The following is a 192-amino-acid chain: Ion-translocating oxidoreductase complex subunit B (192 aa).

The hydrophobic stretch occupies residues 1-26; sequence MNAIWIAVAAVSLLGLAFGAILGYAS. A 4Fe-4S domain is found at 32 to 91; sequence EDDPVVEKIDEILPQSQCGQCGYPGCRPYAETISCNGEKINRCAPGGEAVMLKIAELLNV. C49, C52, C57, C74, C117, C120, C123, C127, C147, C150, C153, and C157 together coordinate [4Fe-4S] cluster. 4Fe-4S ferredoxin-type domains lie at 108–137 and 138–167; these read MVAV…GATR and AMHT…LQPV.

The protein belongs to the 4Fe4S bacterial-type ferredoxin family. RnfB subfamily. As to quaternary structure, the complex is composed of six subunits: RsxA, RsxB, RsxC, RsxD, RsxE and RsxG. Requires [4Fe-4S] cluster as cofactor.

It is found in the cell inner membrane. Its function is as follows. Part of a membrane-bound complex that couples electron transfer with translocation of ions across the membrane. Required to maintain the reduced state of SoxR. In Escherichia coli O6:K15:H31 (strain 536 / UPEC), this protein is Ion-translocating oxidoreductase complex subunit B.